A 311-amino-acid chain; its full sequence is Methionyl-tRNA formyltransferase (311 aa).

(6S)-5,6,7,8-tetrahydrofolate is bound at residue 110–113 (SLLP).

The protein belongs to the Fmt family.

It catalyses the reaction L-methionyl-tRNA(fMet) + (6R)-10-formyltetrahydrofolate = N-formyl-L-methionyl-tRNA(fMet) + (6S)-5,6,7,8-tetrahydrofolate + H(+). Functionally, attaches a formyl group to the free amino group of methionyl-tRNA(fMet). The formyl group appears to play a dual role in the initiator identity of N-formylmethionyl-tRNA by promoting its recognition by IF2 and preventing the misappropriation of this tRNA by the elongation apparatus. The sequence is that of Methionyl-tRNA formyltransferase from Streptococcus gordonii (strain Challis / ATCC 35105 / BCRC 15272 / CH1 / DL1 / V288).